The sequence spans 439 residues: Xylose isomerase (439 aa).

Residues His-101 and Asp-104 contribute to the active site. 7 residues coordinate Mg(2+): Glu-232, Glu-268, His-271, Asp-296, Asp-307, Asp-309, and Asp-339.

This sequence belongs to the xylose isomerase family. As to quaternary structure, homotetramer. Requires Mg(2+) as cofactor.

Its subcellular location is the cytoplasm. It carries out the reaction alpha-D-xylose = alpha-D-xylulofuranose. The polypeptide is Xylose isomerase (Marinomonas sp. (strain MWYL1)).